The chain runs to 506 residues: Subtilisin-like serine protease Cur l 4.0101 (506 aa).

A signal peptide spans 1 to 15; the sequence is MKYSLIAALPALAAA. The propeptide at 16-135 is removed in mature form; the sequence is SPTFSTETIH…IERDSEVRIL (120 aa). The Inhibitor I9 domain maps to 43–134; it reads SYMVVFKKHV…YIERDSEVRI (92 aa). The segment at 59–79 is disordered; sequence HDWVQSVHSKNTQERMELRKR. Over residues 69–79 the composition is skewed to basic and acidic residues; that stretch reads NTQERMELRKR. The Peptidase S8 domain occupies 147-453; the sequence is PWGLARISHR…GGSSNYTDII (307 aa). Active-site charge relay system residues include Asp-183 and His-215. N-linked (GlcNAc...) asparagine glycans are attached at residues Asn-245 and Asn-285. Residue Ser-381 is the Charge relay system of the active site. An N-linked (GlcNAc...) asparagine glycan is attached at Asn-448. A propeptide spans 459–506 (removed in mature form); that stretch reads TVKKAASKEEEKESEFRITIPSLSELEDDFEKAKESAGRKAHHVGGKL.

This sequence belongs to the peptidase S8 family.

In terms of biological role, serine protease. The polypeptide is Subtilisin-like serine protease Cur l 4.0101 (Cochliobolus lunatus (Filamentous fungus)).